We begin with the raw amino-acid sequence, 230 residues long: Cytidylate kinase (230 aa).

ATP is bound at residue 12-20; it reads GPSGAGKST.

Belongs to the cytidylate kinase family. Type 1 subfamily.

The protein resides in the cytoplasm. It catalyses the reaction CMP + ATP = CDP + ADP. It carries out the reaction dCMP + ATP = dCDP + ADP. The protein is Cytidylate kinase of Corynebacterium diphtheriae (strain ATCC 700971 / NCTC 13129 / Biotype gravis).